A 390-amino-acid chain; its full sequence is Protein dom34 (390 aa).

The protein belongs to the eukaryotic release factor 1 family. Pelota subfamily. In terms of assembly, component of the Dom34-Hbs1 complex, also named Pelota-HBS1L complex, composed of dom34 and hbs1. It depends on a divalent metal cation as a cofactor.

It is found in the cytoplasm. In terms of biological role, component of the Dom34-Hbs1 complex, a complex that recognizes stalled ribosomes and triggers the No-Go Decay (NGD) pathway. In the Dom34-Hbs1 complex, dom34 recognizes ribosomes stalled at the 3' end of an mRNA and engages stalled ribosomes by destabilizing mRNA in the mRNA channel. Following ribosome-binding, the Dom34-Hbs1 complex promotes the disassembly of stalled ribosomes, followed by degradation of damaged mRNAs as part of the NGD pathway. This Schizosaccharomyces pombe (strain 972 / ATCC 24843) (Fission yeast) protein is Protein dom34.